The primary structure comprises 161 residues: Nucleotide-binding protein Rfer_2692 (161 aa).

It belongs to the YajQ family.

Functionally, nucleotide-binding protein. This is Nucleotide-binding protein Rfer_2692 from Albidiferax ferrireducens (strain ATCC BAA-621 / DSM 15236 / T118) (Rhodoferax ferrireducens).